A 270-amino-acid polypeptide reads, in one-letter code: Phosphatidate cytidylyltransferase (270 aa).

A run of 7 helical transmembrane segments spans residues 19–39, 53–73, 76–96, 101–121, 126–146, 183–203, and 248–268; these read LWLTWVGGVGFTLFSIAIGLA, TAFSRLFGWAWLIVTGILLIL, GALLTIGFLVAGCAILLVTQW, GWPAAGLFYAGFSALSLSLLR, FGFTTIVFLFAVVWSTDIAAY, LVASLVAAPGGWGVPVLALLL, and ALLYLFGAIFAEPDVPSAIFF.

It belongs to the CDS family.

The protein resides in the cell inner membrane. It catalyses the reaction a 1,2-diacyl-sn-glycero-3-phosphate + CTP + H(+) = a CDP-1,2-diacyl-sn-glycerol + diphosphate. It participates in phospholipid metabolism; CDP-diacylglycerol biosynthesis; CDP-diacylglycerol from sn-glycerol 3-phosphate: step 3/3. The polypeptide is Phosphatidate cytidylyltransferase (cdsA) (Brucella melitensis biotype 1 (strain ATCC 23456 / CCUG 17765 / NCTC 10094 / 16M)).